The chain runs to 352 residues: fMet-Leu-Phe receptor (352 aa).

Topologically, residues 1 to 27 are extracellular; the sequence is MDSNASLPLNVSGGTQATPAGLVVLDV. 2 N-linked (GlcNAc...) asparagine glycosylation sites follow: Asn4 and Asn10. The chain crosses the membrane as a helical span at residues 28–50; the sequence is FSYLILVVTFVLGVLGNGLVIWV. The Cytoplasmic portion of the chain corresponds to 51 to 61; it reads TGFRMTHTVTT. The helical transmembrane segment at 62–83 threads the bilayer; sequence ISYLNLALADFSFTSTLPFFIV. Over 84 to 100 the chain is Extracellular; it reads TKALGGHWPFGWFLCKF. Cysteines 98 and 178 form a disulfide. The chain crosses the membrane as a helical span at residues 101–121; it reads VFTIVDINLFGSVFLIALIAL. Topologically, residues 122 to 140 are cytoplasmic; sequence DRCICVLHPVWAQNHRNVS. The helical transmembrane segment at 141–162 threads the bilayer; sequence LAKKVIVGPWICALLLTLPVII. Over 163–207 the chain is Extracellular; it reads RVTTLSHPRAPGKMACTFDWSPWTEDPAEKLKVAISMFMVRGIIR. Residues 208–228 traverse the membrane as a helical segment; the sequence is FIIGFSTPMSIVAVCYGLIAT. At 229 to 244 the chain is on the cytoplasmic side; sequence KIHRQGLIKSSRPLRV. A helical membrane pass occupies residues 245 to 268; it reads LSFVVASFLLCWSPYQIAALIATV. Over 269–287 the chain is Extracellular; that stretch reads RIRELLLGMGKDLRIVLDV. A helical transmembrane segment spans residues 288–307; sequence TSFVAFFNSCLNPMLYVFMG. Over 308-352 the chain is Cytoplasmic; that stretch reads QDFRERLIHSLPASLERALSEDSAQTSDTGTNSTSAPAEAELQAI.

The protein belongs to the G-protein coupled receptor 1 family. Post-translationally, phosphorylated; which is necessary for desensitization. Neutrophils.

The protein localises to the cell membrane. Functionally, high affinity receptor for N-formyl-methionyl peptides (fMLP), which are powerful neutrophil chemotactic factors. Binding of fMLP to the receptor stimulates intracellular calcium mobilization and superoxide anion release. This response is mediated via a G-protein that activates a phosphatidylinositol-calcium second messenger system. Receptor for TAFA4, mediates its effects on chemoattracting macrophages, promoting phagocytosis and increasing ROS release. Receptor for cathepsin CTSG, leading to increased phagocyte chemotaxis. The sequence is that of fMet-Leu-Phe receptor (FPR1) from Oryctolagus cuniculus (Rabbit).